The primary structure comprises 640 residues: Threonine--tRNA ligase (640 aa).

The 61-residue stretch at 1 to 61 folds into the TGS domain; sequence MPIITLPDGS…DHDATLQIIT (61 aa). Residues 242–533 are catalytic; sequence DHRKLGKRLD…LIEHYEGAFP (292 aa). Residues cysteine 333, histidine 384, and histidine 510 each coordinate Zn(2+).

Belongs to the class-II aminoacyl-tRNA synthetase family. In terms of assembly, homodimer. It depends on Zn(2+) as a cofactor.

The protein resides in the cytoplasm. It carries out the reaction tRNA(Thr) + L-threonine + ATP = L-threonyl-tRNA(Thr) + AMP + diphosphate + H(+). In terms of biological role, catalyzes the attachment of threonine to tRNA(Thr) in a two-step reaction: L-threonine is first activated by ATP to form Thr-AMP and then transferred to the acceptor end of tRNA(Thr). Also edits incorrectly charged L-seryl-tRNA(Thr). The protein is Threonine--tRNA ligase of Azotobacter vinelandii (strain DJ / ATCC BAA-1303).